Reading from the N-terminus, the 543-residue chain is Chaperonin GroEL 1 (543 aa).

ATP-binding positions include 30–33 (TLGP), K51, 87–91 (DGTTT), G415, and D496.

Belongs to the chaperonin (HSP60) family. Forms a cylinder of 14 subunits composed of two heptameric rings stacked back-to-back. Interacts with the co-chaperonin GroES.

The protein localises to the cytoplasm. It carries out the reaction ATP + H2O + a folded polypeptide = ADP + phosphate + an unfolded polypeptide.. Functionally, together with its co-chaperonin GroES, plays an essential role in assisting protein folding. The GroEL-GroES system forms a nano-cage that allows encapsulation of the non-native substrate proteins and provides a physical environment optimized to promote and accelerate protein folding. In Mesorhizobium japonicum (strain LMG 29417 / CECT 9101 / MAFF 303099) (Mesorhizobium loti (strain MAFF 303099)), this protein is Chaperonin GroEL 1.